Consider the following 901-residue polypeptide: HTH-type transcriptional regulator MalT (901 aa).

39–46 (SPAGYGKT) contributes to the ATP binding site. One can recognise an HTH luxR-type domain in the interval 829 to 894 (ELIRTSPLTQ…DAVQHAQQLL (66 aa)). A DNA-binding region (H-T-H motif) is located at residues 853 to 872 (NEQIAGELAVAATTIKTHIR).

The protein belongs to the MalT family. As to quaternary structure, monomer in solution. Oligomerizes to an active state in the presence of the positive effectors ATP and maltotriose.

Activated by ATP and maltotriose, which are both required for DNA binding. Functionally, positively regulates the transcription of the maltose regulon whose gene products are responsible for uptake and catabolism of malto-oligosaccharides. Specifically binds to the promoter region of its target genes, recognizing a short DNA motif called the MalT box. This Salmonella heidelberg (strain SL476) protein is HTH-type transcriptional regulator MalT.